Consider the following 644-residue polypeptide: Exoribonuclease 2 (644 aa).

The RNB domain occupies 189 to 516 (REDLTALDFV…NHRLLKAVIK (328 aa)). The 83-residue stretch at 561–643 (DTRFAAEIVD…ETRSIIARPV (83 aa)) folds into the S1 motif domain.

Belongs to the RNR ribonuclease family. RNase II subfamily.

The protein localises to the cytoplasm. It catalyses the reaction Exonucleolytic cleavage in the 3'- to 5'-direction to yield nucleoside 5'-phosphates.. In terms of biological role, involved in mRNA degradation. Hydrolyzes single-stranded polyribonucleotides processively in the 3' to 5' direction. This is Exoribonuclease 2 from Escherichia coli (strain ATCC 8739 / DSM 1576 / NBRC 3972 / NCIMB 8545 / WDCM 00012 / Crooks).